Reading from the N-terminus, the 276-residue chain is Dermonecrotic toxin LlSicTox-alphaIV1i (276 aa).

The active site involves His-5. The Mg(2+) site is built by Glu-25 and Asp-27. The Nucleophile role is filled by His-41. 2 disulfides stabilise this stretch: Cys-45/Cys-51 and Cys-47/Cys-193. Asp-85 is a Mg(2+) binding site.

Belongs to the arthropod phospholipase D family. Class II subfamily. The cofactor is Mg(2+). In terms of tissue distribution, expressed by the venom gland.

The protein localises to the secreted. The catalysed reaction is an N-(acyl)-sphingosylphosphocholine = an N-(acyl)-sphingosyl-1,3-cyclic phosphate + choline. It catalyses the reaction an N-(acyl)-sphingosylphosphoethanolamine = an N-(acyl)-sphingosyl-1,3-cyclic phosphate + ethanolamine. It carries out the reaction a 1-acyl-sn-glycero-3-phosphocholine = a 1-acyl-sn-glycero-2,3-cyclic phosphate + choline. The enzyme catalyses a 1-acyl-sn-glycero-3-phosphoethanolamine = a 1-acyl-sn-glycero-2,3-cyclic phosphate + ethanolamine. Dermonecrotic toxins cleave the phosphodiester linkage between the phosphate and headgroup of certain phospholipids (sphingolipid and lysolipid substrates), forming an alcohol (often choline) and a cyclic phosphate. This toxin acts on sphingomyelin (SM). It may also act on ceramide phosphoethanolamine (CPE), lysophosphatidylcholine (LPC) and lysophosphatidylethanolamine (LPE), but not on lysophosphatidylserine (LPS), and lysophosphatidylglycerol (LPG). It acts by transphosphatidylation, releasing exclusively cyclic phosphate products as second products. Induces dermonecrosis, hemolysis, increased vascular permeability, edema, inflammatory response, and platelet aggregation. The chain is Dermonecrotic toxin LlSicTox-alphaIV1i from Loxosceles laeta (South American recluse spider).